Consider the following 122-residue polypeptide: Large ribosomal subunit protein uL14 (122 aa).

It belongs to the universal ribosomal protein uL14 family. Part of the 50S ribosomal subunit. Forms a cluster with proteins L3 and L19. In the 70S ribosome, L14 and L19 interact and together make contacts with the 16S rRNA in bridges B5 and B8.

In terms of biological role, binds to 23S rRNA. Forms part of two intersubunit bridges in the 70S ribosome. The sequence is that of Large ribosomal subunit protein uL14 from Shewanella halifaxensis (strain HAW-EB4).